The chain runs to 462 residues: Argininosuccinate lyase (462 aa).

Belongs to the lyase 1 family. Argininosuccinate lyase subfamily.

It is found in the cytoplasm. It catalyses the reaction 2-(N(omega)-L-arginino)succinate = fumarate + L-arginine. It participates in amino-acid biosynthesis; L-arginine biosynthesis; L-arginine from L-ornithine and carbamoyl phosphate: step 3/3. The sequence is that of Argininosuccinate lyase from Bacillus cereus (strain B4264).